The sequence spans 110 residues: Large ribosomal subunit protein uL22 (110 aa).

Belongs to the universal ribosomal protein uL22 family. Part of the 50S ribosomal subunit.

Its function is as follows. This protein binds specifically to 23S rRNA; its binding is stimulated by other ribosomal proteins, e.g. L4, L17, and L20. It is important during the early stages of 50S assembly. It makes multiple contacts with different domains of the 23S rRNA in the assembled 50S subunit and ribosome. In terms of biological role, the globular domain of the protein is located near the polypeptide exit tunnel on the outside of the subunit, while an extended beta-hairpin is found that lines the wall of the exit tunnel in the center of the 70S ribosome. This chain is Large ribosomal subunit protein uL22, found in Histophilus somni (strain 2336) (Haemophilus somnus).